The chain runs to 117 residues: UPF0642 protein C32H8.05 (117 aa).

The segment at 39-117 is disordered; that stretch reads DQVNDLTKSS…SNFSKFLKKK (79 aa). A compositionally biased stretch (basic residues) spans 93 to 106; that stretch reads KWAKKHLKKGKRAK. Positions 107 to 117 are enriched in low complexity; sequence NSNFSKFLKKK.

This sequence belongs to the UPF0642 family.

The protein resides in the nucleus. It localises to the nucleolus. The chain is UPF0642 protein C32H8.05 from Schizosaccharomyces pombe (strain 972 / ATCC 24843) (Fission yeast).